The following is a 429-amino-acid chain: Histidinol dehydrogenase (429 aa).

NAD(+) contacts are provided by Tyr130, Gln191, and Asn214. Substrate is bound by residues Ser237, Gln259, and His262. Gln259 and His262 together coordinate Zn(2+). Catalysis depends on proton acceptor residues Glu327 and His328. Residues His328, Asp361, Glu415, and His420 each coordinate substrate. Asp361 lines the Zn(2+) pocket. Residue His420 coordinates Zn(2+).

The protein belongs to the histidinol dehydrogenase family. Zn(2+) serves as cofactor.

It catalyses the reaction L-histidinol + 2 NAD(+) + H2O = L-histidine + 2 NADH + 3 H(+). It functions in the pathway amino-acid biosynthesis; L-histidine biosynthesis; L-histidine from 5-phospho-alpha-D-ribose 1-diphosphate: step 9/9. Its function is as follows. Catalyzes the sequential NAD-dependent oxidations of L-histidinol to L-histidinaldehyde and then to L-histidine. The polypeptide is Histidinol dehydrogenase (Neisseria meningitidis serogroup A / serotype 4A (strain DSM 15465 / Z2491)).